Here is a 551-residue protein sequence, read N- to C-terminus: Small ribosomal subunit protein bS1 (551 aa).

S1 motif domains lie at 21–83 (GALV…LSRE), 101–167 (GEMV…VSRR), 188–256 (GQEI…LGMK), 273–343 (NSRV…LGIK), 360–430 (DEKI…LGIK), and 447–516 (DAVI…VSHK).

Belongs to the bacterial ribosomal protein bS1 family.

Binds mRNA; thus facilitating recognition of the initiation point. It is needed to translate mRNA with a short Shine-Dalgarno (SD) purine-rich sequence. The chain is Small ribosomal subunit protein bS1 (rpsA) from Coxiella burnetii (strain RSA 493 / Nine Mile phase I).